The primary structure comprises 289 residues: MNAKIRAYVALMKLRVVELLLITTVPVMMLADRGMPSLWLIAVTLVAGTLAAGSANTINCYVDRDIDQVMGRTKRRPLVRATVTPTEALTFGIVIGIVSTLMFGLLVNWPSALLADGAIAFYVFVYTLGLKRRTPSNIVIGGAAGCFPVLIGWSAVTGTVGWSAVLLFAVVFFWTPPHFWALAMKFRDDYAAAGIPMLPVVAPVEVVTRRIVGYSYAMVAASLALVPVAHTGPVYLVSAVVVGAWFLAEAHRIDRRTRRGDDPRPMRLFHMSITYLTLLFVAIAVTAVV.

Transmembrane regions (helical) follow at residues 9–29, 35–55, 89–109, 110–130, 138–158, 164–184, 188–208, 228–248, and 269–289; these read VALM…PVMM, MPSL…AGSA, LTFG…LVNW, PSAL…TLGL, IVIG…AVTG, AVLL…ALAM, DDYA…EVVT, VAHT…WFLA, and FHMS…TAVV.

This sequence belongs to the UbiA prenyltransferase family. Protoheme IX farnesyltransferase subfamily.

It is found in the cell membrane. The catalysed reaction is heme b + (2E,6E)-farnesyl diphosphate + H2O = Fe(II)-heme o + diphosphate. The protein operates within porphyrin-containing compound metabolism; heme O biosynthesis; heme O from protoheme: step 1/1. Its function is as follows. Converts heme B (protoheme IX) to heme O by substitution of the vinyl group on carbon 2 of heme B porphyrin ring with a hydroxyethyl farnesyl side group. This Frankia alni (strain DSM 45986 / CECT 9034 / ACN14a) protein is Protoheme IX farnesyltransferase.